Consider the following 607-residue polypeptide: Guanine nucleotide-binding protein-like 1 (607 aa).

Residues 1–14 (MPRKKPFSVKQKKK) are compositionally biased toward basic residues. Positions 1 to 81 (MPRKKPFSVK…GPRGYDPNRY (81 aa)) are disordered. Residues 15 to 26 (QLQDKRERKRGL) show a composition bias toward basic and acidic residues. 3 positions are modified to phosphoserine: Ser-32, Ser-33, and Ser-34. Residues Thr-48 and Thr-50 each carry the phosphothreonine modification. A phosphoserine mark is found at Ser-51 and Ser-68. Residues 178–418 (WRQLWRVLEM…LCDCPGLIFP (241 aa)) enclose the CP-type G domain. 225–228 (NKVD) is a GTP binding site. Ser-324 carries the phosphoserine modification. GTP-binding positions include 367–374 (GFPNVGKS) and 411–415 (DCPGL). Residues 547–607 (GPAGDEEEEE…PYALLGEDEC (61 aa)) form a disordered region. Residues 550–584 (GDEEEEEEEELSSSCEEEGEEDRDADEEGEGDEET) are compositionally biased toward acidic residues. A phosphoserine mark is found at Ser-561, Ser-562, and Ser-563.

This sequence belongs to the TRAFAC class YlqF/YawG GTPase family.

In terms of biological role, possible regulatory or functional link with the histocompatibility cluster. This Homo sapiens (Human) protein is Guanine nucleotide-binding protein-like 1 (GNL1).